The sequence spans 250 residues: Undecaprenyl-diphosphatase (250 aa).

7 helical membrane-spanning segments follow: residues Asp-35–Gly-55, Ile-73–Leu-93, Ser-100–Ile-120, Ala-146–Ile-166, Glu-171–Leu-191, Ser-200–Leu-220, and Leu-229–Ile-249.

This sequence belongs to the UppP family.

It is found in the cell inner membrane. The catalysed reaction is di-trans,octa-cis-undecaprenyl diphosphate + H2O = di-trans,octa-cis-undecaprenyl phosphate + phosphate + H(+). Its function is as follows. Catalyzes the dephosphorylation of undecaprenyl diphosphate (UPP). Confers resistance to bacitracin. This Thermosipho melanesiensis (strain DSM 12029 / CIP 104789 / BI429) protein is Undecaprenyl-diphosphatase.